Reading from the N-terminus, the 476-residue chain is Cysteine--tRNA ligase (476 aa).

Cys29 serves as a coordination point for Zn(2+). Positions 31–41 match the 'HIGH' region motif; that stretch reads PTVYDYPHLGH. Positions 209, 234, and 238 each coordinate Zn(2+). Residues 266 to 270 carry the 'KMSKS' region motif; sequence KMSKS. Lys269 contributes to the ATP binding site.

This sequence belongs to the class-I aminoacyl-tRNA synthetase family. Zn(2+) serves as cofactor.

Its subcellular location is the cytoplasm. It carries out the reaction tRNA(Cys) + L-cysteine + ATP = L-cysteinyl-tRNA(Cys) + AMP + diphosphate. This chain is Cysteine--tRNA ligase, found in Thermococcus gammatolerans (strain DSM 15229 / JCM 11827 / EJ3).